The following is a 173-amino-acid chain: ATP synthase subunit b (173 aa).

Residues 15–35 (LYVGDMLFYAILFIVLMALIA) traverse the membrane as a helical segment.

Belongs to the ATPase B chain family. F-type ATPases have 2 components, F(1) - the catalytic core - and F(0) - the membrane proton channel. F(1) has five subunits: alpha(3), beta(3), gamma(1), delta(1), epsilon(1). F(0) has three main subunits: a(1), b(2) and c(10-14). The alpha and beta chains form an alternating ring which encloses part of the gamma chain. F(1) is attached to F(0) by a central stalk formed by the gamma and epsilon chains, while a peripheral stalk is formed by the delta and b chains.

It localises to the cell membrane. In terms of biological role, f(1)F(0) ATP synthase produces ATP from ADP in the presence of a proton or sodium gradient. F-type ATPases consist of two structural domains, F(1) containing the extramembraneous catalytic core and F(0) containing the membrane proton channel, linked together by a central stalk and a peripheral stalk. During catalysis, ATP synthesis in the catalytic domain of F(1) is coupled via a rotary mechanism of the central stalk subunits to proton translocation. Functionally, component of the F(0) channel, it forms part of the peripheral stalk, linking F(1) to F(0). This is ATP synthase subunit b from Pediococcus pentosaceus (strain ATCC 25745 / CCUG 21536 / LMG 10740 / 183-1w).